A 671-amino-acid polypeptide reads, in one-letter code: UBA domain-containing protein RUP1 (671 aa).

One can recognise a UBA domain in the interval M1–N41. S56 carries the post-translational modification Phosphoserine. The segment at G68–V87 is disordered. Positions S432–E501 form a coiled coil. The interval D643 to N671 is disordered. The span at N661 to N671 shows a compositional bias: acidic residues.

As to quaternary structure, forms a ternary complex with RSP5 and UBP2.

The protein resides in the cytoplasm. It is found in the nucleus. In terms of biological role, modulates the activity of the RSP5 HECT ubiquitin-protein ligase through its mediation of the interaction between RSP5 and the deubiquitinase UBP2. Involved in regulation of cell wall homeostasis. The protein is UBA domain-containing protein RUP1 (RUP1) of Saccharomyces cerevisiae (strain ATCC 204508 / S288c) (Baker's yeast).